Here is a 246-residue protein sequence, read N- to C-terminus: Triosephosphate isomerase (246 aa).

A substrate-binding site is contributed by 9-11; the sequence is NWK. His91 serves as the catalytic Electrophile. The active-site Proton acceptor is the Glu161. Substrate is bound by residues Gly167, Ser206, and 227–228; that span reads GG.

It belongs to the triosephosphate isomerase family. Homodimer.

Its subcellular location is the cytoplasm. The catalysed reaction is D-glyceraldehyde 3-phosphate = dihydroxyacetone phosphate. It functions in the pathway carbohydrate biosynthesis; gluconeogenesis. Its pathway is carbohydrate degradation; glycolysis; D-glyceraldehyde 3-phosphate from glycerone phosphate: step 1/1. Involved in the gluconeogenesis. Catalyzes stereospecifically the conversion of dihydroxyacetone phosphate (DHAP) to D-glyceraldehyde-3-phosphate (G3P). The chain is Triosephosphate isomerase from Ruegeria sp. (strain TM1040) (Silicibacter sp.).